The following is a 342-amino-acid chain: N-acetyl-gamma-glutamyl-phosphate reductase (342 aa).

Cysteine 149 is an active-site residue.

The protein belongs to the NAGSA dehydrogenase family. Type 1 subfamily.

It is found in the cytoplasm. The enzyme catalyses N-acetyl-L-glutamate 5-semialdehyde + phosphate + NADP(+) = N-acetyl-L-glutamyl 5-phosphate + NADPH + H(+). Its pathway is amino-acid biosynthesis; L-arginine biosynthesis; N(2)-acetyl-L-ornithine from L-glutamate: step 3/4. Functionally, catalyzes the NADPH-dependent reduction of N-acetyl-5-glutamyl phosphate to yield N-acetyl-L-glutamate 5-semialdehyde. In Cereibacter sphaeroides (strain KD131 / KCTC 12085) (Rhodobacter sphaeroides), this protein is N-acetyl-gamma-glutamyl-phosphate reductase.